The sequence spans 425 residues: Enolase (425 aa).

(2R)-2-phosphoglycerate is bound at residue Gln163. The Proton donor role is filled by Glu205. Mg(2+) contacts are provided by Asp242, Glu285, and Asp312. (2R)-2-phosphoglycerate is bound by residues Lys337, Arg366, Ser367, and Lys388. Catalysis depends on Lys337, which acts as the Proton acceptor.

This sequence belongs to the enolase family. The cofactor is Mg(2+).

It is found in the cytoplasm. The protein resides in the secreted. The protein localises to the cell surface. It carries out the reaction (2R)-2-phosphoglycerate = phosphoenolpyruvate + H2O. Its pathway is carbohydrate degradation; glycolysis; pyruvate from D-glyceraldehyde 3-phosphate: step 4/5. In terms of biological role, catalyzes the reversible conversion of 2-phosphoglycerate (2-PG) into phosphoenolpyruvate (PEP). It is essential for the degradation of carbohydrates via glycolysis. This is Enolase from Acidiphilium cryptum (strain JF-5).